We begin with the raw amino-acid sequence, 331 residues long: Cytosolic sulfotransferase 8 (331 aa).

The span at 1–11 (MGEKDIPRNLK) shows a compositional bias: basic and acidic residues. A disordered region spans residues 1 to 31 (MGEKDIPRNLKEEEEEEEENQSEETKSLISS). Over residues 12–22 (EEEEEEEENQS) the composition is skewed to acidic residues. 80–85 (KSGTTW) lines the 3'-phosphoadenylyl sulfate pocket. H145 (proton acceptor) is an active-site residue. Residues R167, S175, Y231, and 297–299 (RKG) each bind 3'-phosphoadenylyl sulfate.

Belongs to the sulfotransferase 1 family. As to expression, expressed in seedlings and roots.

The protein resides in the cytoplasm. Sulfotransferase that utilizes 3'-phospho-5'-adenylyl sulfate (PAPS) as sulfonate donor. No activity with brassinosteroids. In Arabidopsis thaliana (Mouse-ear cress), this protein is Cytosolic sulfotransferase 8 (SOT8).